A 431-amino-acid polypeptide reads, in one-letter code: 2-oxoisovalerate dehydrogenase subunit alpha, mitochondrial (431 aa).

Position 140-142 (140-142 (QYR)) interacts with thiamine diphosphate. The K(+) site is built by Ser-189, Thr-194, and Gln-195.

The protein belongs to the BCKDHA family. Thiamine diphosphate is required as a cofactor.

It localises to the mitochondrion matrix. It catalyses the reaction N(6)-[(R)-lipoyl]-L-lysyl-[protein] + 3-methyl-2-oxobutanoate + H(+) = N(6)-[(R)-S(8)-2-methylpropanoyldihydrolipoyl]-L-lysyl-[protein] + CO2. Its pathway is lipid metabolism; fatty acid biosynthesis. The branched-chain alpha-keto dehydrogenase complex catalyzes the overall conversion of alpha-keto acids to acyl-CoA and CO(2). It contains multiple copies of three enzymatic components: branched-chain alpha-keto acid decarboxylase (E1), lipoamide acyltransferase (E2) and lipoamide dehydrogenase (E3). Required for the production of the monomethyl branched-chain fatty acids (mmBCFAs) isopentadecanoate (C15iso) and isoheptadecanoate (C17iso). This Caenorhabditis elegans protein is 2-oxoisovalerate dehydrogenase subunit alpha, mitochondrial.